Consider the following 584-residue polypeptide: Arginine--tRNA ligase (584 aa).

Positions 130–140 (PNVAKEMHVGH) match the 'HIGH' region motif.

The protein belongs to the class-I aminoacyl-tRNA synthetase family. In terms of assembly, monomer.

The protein localises to the cytoplasm. It catalyses the reaction tRNA(Arg) + L-arginine + ATP = L-arginyl-tRNA(Arg) + AMP + diphosphate. This chain is Arginine--tRNA ligase, found in Protochlamydia amoebophila (strain UWE25).